Reading from the N-terminus, the 364-residue chain is UDP-N-acetylglucosamine--N-acetylmuramyl-(pentapeptide) pyrophosphoryl-undecaprenol N-acetylglucosamine transferase (364 aa).

Residues 10–12 (TGG), asparagine 128, arginine 170, serine 199, isoleucine 250, and glutamine 295 contribute to the UDP-N-acetyl-alpha-D-glucosamine site.

It belongs to the glycosyltransferase 28 family. MurG subfamily.

It localises to the cell inner membrane. The enzyme catalyses di-trans,octa-cis-undecaprenyl diphospho-N-acetyl-alpha-D-muramoyl-L-alanyl-D-glutamyl-meso-2,6-diaminopimeloyl-D-alanyl-D-alanine + UDP-N-acetyl-alpha-D-glucosamine = di-trans,octa-cis-undecaprenyl diphospho-[N-acetyl-alpha-D-glucosaminyl-(1-&gt;4)]-N-acetyl-alpha-D-muramoyl-L-alanyl-D-glutamyl-meso-2,6-diaminopimeloyl-D-alanyl-D-alanine + UDP + H(+). It participates in cell wall biogenesis; peptidoglycan biosynthesis. In terms of biological role, cell wall formation. Catalyzes the transfer of a GlcNAc subunit on undecaprenyl-pyrophosphoryl-MurNAc-pentapeptide (lipid intermediate I) to form undecaprenyl-pyrophosphoryl-MurNAc-(pentapeptide)GlcNAc (lipid intermediate II). The chain is UDP-N-acetylglucosamine--N-acetylmuramyl-(pentapeptide) pyrophosphoryl-undecaprenol N-acetylglucosamine transferase from Chlorobium phaeobacteroides (strain DSM 266 / SMG 266 / 2430).